Reading from the N-terminus, the 452-residue chain is MPQVKIIAKNFMDMVASLPAIKLDKLYNNVFICEAILRSLPPLAKKYVLQMLYIDVPVPATMMEEWVLADGTSKHRVAIDRLIQLRIFSEISDRKRGTSYSLNPTFQNNLQKHIISGGVLPREPMNSDNAIKLPSLQELETYALKQWECFLLQLINSGQGEKLTGISSSMMKIFQRGLLSQRDKDGPRLTESGFQFLLMDTNAQLWYIIREYILNAEERDVDPADLISFLLELSFHVTGQAYNLNTLTEVQNNTLKDLADLGLVKLQQGRKDSWFIPTKLATNLSVSLADSSARKEGFVVMETNFRMYAYSTSKLQCEILRLFARIEYQLPNLIACAITKESLYNAFDNGITSDQIITFLQQNSHPRCADRVPSIPENVTDQIRLWETDLQRIEMTQAHFYDEFPSKDVFEAACDFAREWRGLLWEDSKRMRLVVKSEVHNQMREFLHTQSR.

The protein belongs to the TFB2 family. As to quaternary structure, component of the 7-subunit TFIIH core complex composed of XPB, XPD, TFB1/GTF2H1, GTF2H2/P44, TFB4/GTF2H3, TFB2/GTF2H4 and TFB5/GTF2H5, which is active in NER. The core complex associates with the 3-subunit CDK-activating kinase (CAK) module composed of CYCH1/cyclin H1, CDKD and MAT1/At4g30820 to form the 10-subunit holoenzyme (holo-TFIIH) active in transcription.

It is found in the nucleus. Functionally, component of the general transcription and DNA repair factor IIH (TFIIH) core complex, which is involved in general and transcription-coupled nucleotide excision repair (NER) of damaged DNA and, when complexed to CAK, in RNA transcription by RNA polymerase II. In NER, TFIIH acts by opening DNA around the lesion to allow the excision of the damaged oligonucleotide and its replacement by a new DNA fragment. In transcription, TFIIH has an essential role in transcription initiation. When the pre-initiation complex (PIC) has been established, TFIIH is required for promoter opening and promoter escape. Phosphorylation of the C-terminal tail (CTD) of the largest subunit of RNA polymerase II by the kinase module CAK controls the initiation of transcription. This chain is General transcription and DNA repair factor IIH subunit TFB2, found in Arabidopsis thaliana (Mouse-ear cress).